Reading from the N-terminus, the 72-residue chain is Translation initiation factor IF-1 (72 aa).

The region spanning 1 to 72 (MAKQDVIELE…SRGRITYRYK (72 aa)) is the S1-like domain.

The protein belongs to the IF-1 family. In terms of assembly, component of the 30S ribosomal translation pre-initiation complex which assembles on the 30S ribosome in the order IF-2 and IF-3, IF-1 and N-formylmethionyl-tRNA(fMet); mRNA recruitment can occur at any time during PIC assembly.

It localises to the cytoplasm. Functionally, one of the essential components for the initiation of protein synthesis. Stabilizes the binding of IF-2 and IF-3 on the 30S subunit to which N-formylmethionyl-tRNA(fMet) subsequently binds. Helps modulate mRNA selection, yielding the 30S pre-initiation complex (PIC). Upon addition of the 50S ribosomal subunit IF-1, IF-2 and IF-3 are released leaving the mature 70S translation initiation complex. This chain is Translation initiation factor IF-1, found in Staphylococcus epidermidis (strain ATCC 35984 / DSM 28319 / BCRC 17069 / CCUG 31568 / BM 3577 / RP62A).